Reading from the N-terminus, the 425-residue chain is Serine--tRNA ligase (425 aa).

230–232 (TAE) is a binding site for L-serine. Residue 261–263 (RSE) participates in ATP binding. Residue Glu-284 participates in L-serine binding. An ATP-binding site is contributed by 348–351 (EISS). Ser-384 contacts L-serine.

Belongs to the class-II aminoacyl-tRNA synthetase family. Type-1 seryl-tRNA synthetase subfamily. In terms of assembly, homodimer. The tRNA molecule binds across the dimer.

Its subcellular location is the cytoplasm. It catalyses the reaction tRNA(Ser) + L-serine + ATP = L-seryl-tRNA(Ser) + AMP + diphosphate + H(+). It carries out the reaction tRNA(Sec) + L-serine + ATP = L-seryl-tRNA(Sec) + AMP + diphosphate + H(+). It participates in aminoacyl-tRNA biosynthesis; selenocysteinyl-tRNA(Sec) biosynthesis; L-seryl-tRNA(Sec) from L-serine and tRNA(Sec): step 1/1. Functionally, catalyzes the attachment of serine to tRNA(Ser). Is also able to aminoacylate tRNA(Sec) with serine, to form the misacylated tRNA L-seryl-tRNA(Sec), which will be further converted into selenocysteinyl-tRNA(Sec). The sequence is that of Serine--tRNA ligase from Streptococcus thermophilus (strain ATCC BAA-491 / LMD-9).